Consider the following 146-residue polypeptide: Calmodulin-like protein 5 (146 aa).

Ala2 is subject to N-acetylalanine. EF-hand domains lie at 8–43 (EEEA…TGKN), 44–74 (LSEA…TAAK), 78–113 (AGLE…LGQP), and 114–146 (LPQE…LAQE). Ca(2+) is bound by residues Asp21, Asp23, Asn25, Thr27, Glu32, Asp57, Asp59, Asp61, Glu63, Glu68, Asp91, Asp93, Asp95, His97, Glu102, Asp127, Asp129, Asp131, Arg133, and Glu138.

Associates with transglutaminase 3. In terms of tissue distribution, particularly abundant in the epidermis where its expression is directly related to keratinocyte differentiation. Very low expression in lung.

Binds calcium. May be involved in terminal differentiation of keratinocytes. The polypeptide is Calmodulin-like protein 5 (CALML5) (Homo sapiens (Human)).